Reading from the N-terminus, the 1402-residue chain is DNA-directed RNA polymerase subunit beta' (1402 aa).

Zn(2+)-binding residues include Cys-71, Cys-73, Cys-86, and Cys-89. Mg(2+) contacts are provided by Asp-462, Asp-464, and Asp-466. Cys-811, Cys-885, Cys-892, and Cys-895 together coordinate Zn(2+).

It belongs to the RNA polymerase beta' chain family. In terms of assembly, the RNAP catalytic core consists of 2 alpha, 1 beta, 1 beta' and 1 omega subunit. When a sigma factor is associated with the core the holoenzyme is formed, which can initiate transcription. The cofactor is Mg(2+). Zn(2+) is required as a cofactor.

The catalysed reaction is RNA(n) + a ribonucleoside 5'-triphosphate = RNA(n+1) + diphosphate. Functionally, DNA-dependent RNA polymerase catalyzes the transcription of DNA into RNA using the four ribonucleoside triphosphates as substrates. This chain is DNA-directed RNA polymerase subunit beta', found in Rhizobium johnstonii (strain DSM 114642 / LMG 32736 / 3841) (Rhizobium leguminosarum bv. viciae).